A 341-amino-acid chain; its full sequence is Protein phosphatase methylesterase 1 (341 aa).

The disordered stretch occupies residues 1-24 (MAFRKEELSQTLYENESEQSSETK). Over residues 9-20 (SQTLYENESEQS) the composition is skewed to polar residues. Catalysis depends on residues serine 153, aspartate 178, and histidine 304.

Belongs to the AB hydrolase superfamily.

It catalyses the reaction [phosphatase 2A protein]-C-terminal L-leucine methyl ester + H2O = [phosphatase 2A protein]-C-terminal L-leucine + methanol + H(+). In terms of biological role, demethylates proteins that have been reversibly carboxymethylated. Demethylates the phosphatase PP2A catalytic subunit. The protein is Protein phosphatase methylesterase 1 (ppe1) of Schizosaccharomyces pombe (strain 972 / ATCC 24843) (Fission yeast).